Here is a 971-residue protein sequence, read N- to C-terminus: Nitrogen regulatory protein areA (971 aa).

5 disordered regions span residues 39–61 (IHNA…DASA), 146–169 (HKEE…DAGS), 262–307 (QPAH…VNST), 390–416 (SASM…NVST), and 587–691 (DNNG…GNAP). Over residues 42-59 (APTQRTXNSNRIPNSRDA) the composition is skewed to polar residues. Residues 146 to 159 (HKEEQQQRQDEADA) show a composition bias toward basic and acidic residues. 2 stretches are compositionally biased toward polar residues: residues 262-274 (QPAH…SEFN) and 297-307 (FSPQVPAVNST). The span at 390–400 (SASMSNNNNNS) shows a compositional bias: low complexity. Composition is skewed to polar residues over residues 597–606 (LERSQSQSFR) and 632–645 (NGFE…QSSP). 2 stretches are compositionally biased toward low complexity: residues 654–663 (SGFSSVAPSR) and 680–691 (AAAGNGNDGNAP). Residues 694-718 (CTNCFTQTTPLWRRNPEGQPLCNAC) form a GATA-type zinc finger. Positions 742 to 918 (NRGSGTNVPV…PFGSSAGLSS (177 aa)) are disordered. Over residues 744 to 794 (GSGTNVPVGGSSTRSKKTASTLNSRKNSTLSMSTATANSTKPNSSNPTPRV) the composition is skewed to polar residues. The span at 796–826 (TPPATSQPPSSKDVDSPVSGTTSGANTAGST) shows a compositional bias: low complexity. Positions 832-845 (GGPGPSSGAVGGKG) are enriched in gly residues. Polar residues predominate over residues 863-875 (SSMSMQRPATASS). The span at 892-918 (SMDIDSPDSTSSIDGPRPFGSSAGLSS) shows a compositional bias: low complexity.

The protein localises to the nucleus. In terms of biological role, major nitrogen regulatory protein. Positively acting regulatory gene of nitrogen metabolite repression. The chain is Nitrogen regulatory protein areA (AREA) from Fusarium fujikuroi (Bakanae and foot rot disease fungus).